Consider the following 710-residue polypeptide: Dual specificity protein kinase shkE (710 aa).

3 stretches are compositionally biased toward low complexity: residues 83-94 (DVSDSNNNNSTS), 107-129 (NNNNNNNNNNNNNNNNNNNNNNN), and 197-208 (QKQQQSQASIQQ). Disordered stretches follow at residues 83 to 136 (DVSD…PTVI) and 189 to 232 (QHLT…IPPE). The 259-residue stretch at 237–495 (DVKTDLLGGG…EVTQRMNEVL (259 aa)) folds into the Protein kinase domain. Residues 243–251 (LGGGAYGKV) and Lys264 contribute to the ATP site. The Proton acceptor role is filled by Asp359. An SH2 domain is found at 597 to 707 (WFHFDISRDI…CPITEIKVPY (111 aa)).

The protein belongs to the protein kinase superfamily. Ser/Thr protein kinase family. SH2 domain-containing protein kinase subfamily.

It is found in the membrane. It catalyses the reaction L-seryl-[protein] + ATP = O-phospho-L-seryl-[protein] + ADP + H(+). The catalysed reaction is L-threonyl-[protein] + ATP = O-phospho-L-threonyl-[protein] + ADP + H(+). In terms of biological role, required for proper chemotaxis and phagocytosis; proper spatiotemporal control of F-actin levels in chemotaxing cells. Negative regulator of the PI3K (phosphatidylinositol 3 kinase) pathway. Predominantly phosphorylates serines and threonines and tyrosines at a lower level. The protein is Dual specificity protein kinase shkE (shkE) of Dictyostelium discoideum (Social amoeba).